Reading from the N-terminus, the 408-residue chain is Bifunctional polynucleotide phosphatase/kinase (408 aa).

Residues 1 to 38 (MSSKKRKSPPQESLTSYFEKSSKSSKKYGSQNKDSDSS) are disordered. At Ser8 the chain carries Phosphoserine. Composition is skewed to polar residues over residues 10–19 (PQESLTSYFE) and 28–38 (YGSQNKDSDSS). 263–270 (GFPSSGKS) is an ATP binding site.

The protein in the N-terminal section; belongs to the DNA 3' phosphatase family.

Its subcellular location is the nucleus. The enzyme catalyses a 3'end (2'-deoxyribonucleotide 3'-phosphate)-DNA + H2O = a 3'-end 2'-deoxyribonucleotide-DNA + phosphate. It catalyses the reaction a 5'-end dephospho-2'-deoxyribonucleoside-DNA + ATP = a 5'-end 5'-phospho-2'-deoxyribonucleoside-DNA + ADP + H(+). Its function is as follows. Catalyzes the phosphorylation of DNA at 5'-hydroxyl termini and can dephosphorylate its 3'-phosphate termini. Has a role in the repair of breaks in single-stranded DNA. This is Bifunctional polynucleotide phosphatase/kinase (pnk1) from Schizosaccharomyces pombe (strain 972 / ATCC 24843) (Fission yeast).